The following is a 153-amino-acid chain: ATP synthase subunit b' (153 aa).

The chain crosses the membrane as a helical span at residues leucine 23–phenylalanine 40.

The protein belongs to the ATPase B chain family. As to quaternary structure, F-type ATPases have 2 components, F(1) - the catalytic core - and F(0) - the membrane proton channel. F(1) has five subunits: alpha(3), beta(3), gamma(1), delta(1), epsilon(1). F(0) has four main subunits: a(1), b(1), b'(1) and c(10-14). The alpha and beta chains form an alternating ring which encloses part of the gamma chain. F(1) is attached to F(0) by a central stalk formed by the gamma and epsilon chains, while a peripheral stalk is formed by the delta, b and b' chains.

Its subcellular location is the cellular thylakoid membrane. In terms of biological role, f(1)F(0) ATP synthase produces ATP from ADP in the presence of a proton or sodium gradient. F-type ATPases consist of two structural domains, F(1) containing the extramembraneous catalytic core and F(0) containing the membrane proton channel, linked together by a central stalk and a peripheral stalk. During catalysis, ATP synthesis in the catalytic domain of F(1) is coupled via a rotary mechanism of the central stalk subunits to proton translocation. Component of the F(0) channel, it forms part of the peripheral stalk, linking F(1) to F(0). The b'-subunit is a diverged and duplicated form of b found in plants and photosynthetic bacteria. This chain is ATP synthase subunit b', found in Prochlorococcus marinus (strain MIT 9312).